Consider the following 278-residue polypeptide: 4-deoxy-L-threo-5-hexosulose-uronate ketol-isomerase (278 aa).

The Zn(2+) site is built by histidine 196, histidine 198, glutamate 203, and histidine 245.

Belongs to the KduI family. Homohexamer. Zn(2+) serves as cofactor.

The catalysed reaction is 5-dehydro-4-deoxy-D-glucuronate = 3-deoxy-D-glycero-2,5-hexodiulosonate. It functions in the pathway glycan metabolism; pectin degradation; 2-dehydro-3-deoxy-D-gluconate from pectin: step 4/5. Functionally, catalyzes the isomerization of 5-dehydro-4-deoxy-D-glucuronate to 3-deoxy-D-glycero-2,5-hexodiulosonate. The chain is 4-deoxy-L-threo-5-hexosulose-uronate ketol-isomerase from Escherichia coli (strain K12 / MC4100 / BW2952).